We begin with the raw amino-acid sequence, 233 residues long: Large ribosomal subunit protein uL1 (233 aa).

Belongs to the universal ribosomal protein uL1 family. Part of the 50S ribosomal subunit.

Functionally, binds directly to 23S rRNA. The L1 stalk is quite mobile in the ribosome, and is involved in E site tRNA release. In terms of biological role, protein L1 is also a translational repressor protein, it controls the translation of the L11 operon by binding to its mRNA. The polypeptide is Large ribosomal subunit protein uL1 (Shewanella frigidimarina (strain NCIMB 400)).